A 144-amino-acid chain; its full sequence is Large ribosomal subunit protein uL16 (144 aa).

It belongs to the universal ribosomal protein uL16 family. As to quaternary structure, part of the 50S ribosomal subunit.

Binds 23S rRNA and is also seen to make contacts with the A and possibly P site tRNAs. This Lacticaseibacillus paracasei (strain ATCC 334 / BCRC 17002 / CCUG 31169 / CIP 107868 / KCTC 3260 / NRRL B-441) (Lactobacillus paracasei) protein is Large ribosomal subunit protein uL16.